A 314-amino-acid chain; its full sequence is tRNA(Ile)-lysidine synthase, chloroplastic (314 aa).

31–36 (SGGQDS) provides a ligand contact to ATP.

The protein belongs to the tRNA(Ile)-lysidine synthase family.

The protein resides in the plastid. It is found in the chloroplast. It catalyses the reaction cytidine(34) in tRNA(Ile2) + L-lysine + ATP = lysidine(34) in tRNA(Ile2) + AMP + diphosphate + H(+). Functionally, ligates lysine onto the cytidine present at position 34 of the AUA codon-specific tRNA(Ile) that contains the anticodon CAU, in an ATP-dependent manner. Cytidine is converted to lysidine, thus changing the amino acid specificity of the tRNA from methionine to isoleucine. This Cyanidium caldarium (Red alga) protein is tRNA(Ile)-lysidine synthase, chloroplastic.